We begin with the raw amino-acid sequence, 394 residues long: Ornithine aminotransferase 1 (394 aa).

K252 is subject to N6-(pyridoxal phosphate)lysine.

It belongs to the class-III pyridoxal-phosphate-dependent aminotransferase family. OAT subfamily. Requires pyridoxal 5'-phosphate as cofactor.

It is found in the cytoplasm. It carries out the reaction a 2-oxocarboxylate + L-ornithine = L-glutamate 5-semialdehyde + an L-alpha-amino acid. Its pathway is amino-acid biosynthesis; L-proline biosynthesis; L-glutamate 5-semialdehyde from L-ornithine: step 1/1. Its function is as follows. Catalyzes the interconversion of ornithine to glutamate semialdehyde. The chain is Ornithine aminotransferase 1 from Staphylococcus saprophyticus subsp. saprophyticus (strain ATCC 15305 / DSM 20229 / NCIMB 8711 / NCTC 7292 / S-41).